Here is a 1275-residue protein sequence, read N- to C-terminus: Serine/threonine-protein kinase ULK4 (1275 aa).

Residues 4-280 (FILYEEIGRG…WTRLLQHSFW (277 aa)) enclose the Protein kinase domain. Asp121 serves as the catalytic Proton acceptor. Disordered stretches follow at residues 299 to 346 (SRNT…EFRP) and 359 to 393 (FLLSSRPTPRTSTAVEVSPGEDRTHCSPQKTSPLT). Basic and acidic residues predominate over residues 336–346 (FRLENPTEFRP). 2 stretches are compositionally biased toward polar residues: residues 363–373 (SRPTPRTSTAV) and 384–393 (CSPQKTSPLT). HEAT repeat units follow at residues 727–765 (LIQEKDFVSTIIRLLESPSTYIRAKAFLVLLYILIYNRE), 842–880 (LKMCLPLMPIVLHLVTSQVFRPQVVTEEFLFSYGTILSH), 926–964 (STVVDYILPPLVSLVQSQNVEWRLFSLRLLSETTSLLVN), 1025–1063 (LVEESKLIPLIFEVTLEHQESILGNTMQSVIALLNNLVA), 1151–1189 (NRPLTDLISLLIPLLPNEDPEIFDVSSKCLSILVQLYGG), and 1213–1253 (PKEQ…LAPG).

Belongs to the protein kinase superfamily. Ser/Thr protein kinase family. APG1/unc-51/ULK1 subfamily.

The enzyme catalyses L-seryl-[protein] + ATP = O-phospho-L-seryl-[protein] + ADP + H(+). It catalyses the reaction L-threonyl-[protein] + ATP = O-phospho-L-threonyl-[protein] + ADP + H(+). May be involved in the remodeling of cytoskeletal components, such as alpha-tubulin, and in this way regulates neurite branching and elongation, as well as cell motility. The polypeptide is Serine/threonine-protein kinase ULK4 (ULK4) (Pongo abelii (Sumatran orangutan)).